A 353-amino-acid chain; its full sequence is Phospho-N-acetylmuramoyl-pentapeptide-transferase (353 aa).

10 helical membrane passes run 24–44, 66–86, 88–108, 129–149, 160–180, 192–212, 229–249, 256–276, 281–301, and 330–350; these read LGFFIAFFLTLFLMPKFILWA, TPTMGGIVFVFATIIASLLCA, LGNPYVLLGIIVLVGFSFVGF, FGMLFVLSLVVSVLLSVKGLD, PLFEMPTALAVGFWVLVFLSA, GLASVPSIFTLLSLSIFVYVA, VGELFVISLALIGSLFGFLWY, VFMGDSGSLALGGFIAYNAIV, ILLVLMGSIFVIETLSVILQV, and KVIVRFWIISMLSNLVALLSL.

Belongs to the glycosyltransferase 4 family. MraY subfamily. It depends on Mg(2+) as a cofactor.

Its subcellular location is the cell inner membrane. The catalysed reaction is UDP-N-acetyl-alpha-D-muramoyl-L-alanyl-gamma-D-glutamyl-meso-2,6-diaminopimeloyl-D-alanyl-D-alanine + di-trans,octa-cis-undecaprenyl phosphate = di-trans,octa-cis-undecaprenyl diphospho-N-acetyl-alpha-D-muramoyl-L-alanyl-D-glutamyl-meso-2,6-diaminopimeloyl-D-alanyl-D-alanine + UMP. It functions in the pathway cell wall biogenesis; peptidoglycan biosynthesis. Catalyzes the initial step of the lipid cycle reactions in the biosynthesis of the cell wall peptidoglycan: transfers peptidoglycan precursor phospho-MurNAc-pentapeptide from UDP-MurNAc-pentapeptide onto the lipid carrier undecaprenyl phosphate, yielding undecaprenyl-pyrophosphoryl-MurNAc-pentapeptide, known as lipid I. This chain is Phospho-N-acetylmuramoyl-pentapeptide-transferase, found in Helicobacter acinonychis (strain Sheeba).